A 647-amino-acid chain; its full sequence is DNA mismatch repair protein MutL (647 aa).

The interval valine 393–tyrosine 423 is disordered. Residues arginine 409 to tyrosine 423 show a composition bias toward basic and acidic residues.

It belongs to the DNA mismatch repair MutL/HexB family.

In terms of biological role, this protein is involved in the repair of mismatches in DNA. It is required for dam-dependent methyl-directed DNA mismatch repair. May act as a 'molecular matchmaker', a protein that promotes the formation of a stable complex between two or more DNA-binding proteins in an ATP-dependent manner without itself being part of a final effector complex. This chain is DNA mismatch repair protein MutL, found in Streptococcus thermophilus (strain CNRZ 1066).